The sequence spans 306 residues: Deoxyribokinase (306 aa).

Substrate is bound by residues 10–12 (MVD), 38–42 (GKGAN), and Glu139. ATP is bound by residues Asn184 and 220–225 (TMGEKG). 2 residues coordinate K(+): Asp246 and Ser248. Position 251 to 252 (251 to 252 (GD)) interacts with ATP. Asp252 lines the substrate pocket. Residue Asp252 is the Proton acceptor of the active site. K(+) is bound by residues Ser282, Gly285, Gly287, and Ser291.

It belongs to the carbohydrate kinase PfkB family. Deoxyribokinase subfamily. As to quaternary structure, homodimer. It depends on Mg(2+) as a cofactor.

Its subcellular location is the cytoplasm. The enzyme catalyses 2-deoxy-D-ribose + ATP = 2-deoxy-D-ribose 5-phosphate + ADP + H(+). Functionally, catalyzes the ATP-dependent phosphorylation of 2-deoxy-D-ribose to 2-deoxy-D-ribose 5-phosphate (dRib-5P), allowing the use of deoxyribose as the sole carbon source. Can also use D-ribose, with much lower efficiency. The protein is Deoxyribokinase of Salmonella typhi.